The primary structure comprises 521 residues: Small ribosomal subunit protein mL104 (rPPR9) (521 aa).

The transit peptide at 1-59 (MPPSLPSLQLRRLLLRSFISSSSVNTLQSQPRIISSKPLFSPLPPSRSSIFSTFPSRFF) directs the protein to the mitochondrion. 8 PPR repeats span residues 174–204 (GGKT…MEND), 210–240 (DKES…TANE), 244–278 (DENI…GFEI), 279–313 (GTKA…LLEM), 321–355 (NTET…GCQP), 356–390 (DAET…GYGE), 393–427 (NKKE…GCKP), and 428–462 (GIKT…GIAV). Residues 480 to 495 (EVDSNVKKRETLPEKT) show a composition bias toward basic and acidic residues. Residues 480–499 (EVDSNVKKRETLPEKTARKK) are disordered. The short motif at 486–503 (KKRETLPEKTARKKKRLK) is the Nuclear localization signal element.

The protein belongs to the PPR family. P subfamily. As to quaternary structure, interacts with NAP1;1 and TCP8. Able to bind mitochondrial RNA in vitro. Component of the mitochondrial ribosome small subunit. In terms of tissue distribution, expressed in root tips, lateral root primordia and leaf primordia. Highly detected in the mature pollen grains.

It localises to the mitochondrion matrix. The protein localises to the nucleus. In terms of biological role, RNA-binding protein that functions in both mitochondrion and nucleus. In mitochondrion, it is associated with polysomes and may play a role in translation. Required during embryogenesis. In nucleus, might be involved in the regulation of its own gene expression. This chain is Small ribosomal subunit protein mL104 (rPPR9) (PNM1), found in Arabidopsis thaliana (Mouse-ear cress).